A 123-amino-acid polypeptide reads, in one-letter code: uncharacterized protein (123 aa).

Disordered regions lie at residues 1 to 21 (MGAP…KLFK) and 82 to 123 (EKTA…EDES).

This is an uncharacterized protein from Homo sapiens (Human).